Consider the following 360-residue polypeptide: UDP-N-acetylglucosamine--N-acetylmuramyl-(pentapeptide) pyrophosphoryl-undecaprenol N-acetylglucosamine transferase (360 aa).

Residues 11-13, asparagine 120, arginine 161, serine 188, and glutamine 282 each bind UDP-N-acetyl-alpha-D-glucosamine; that span reads TGG.

This sequence belongs to the glycosyltransferase 28 family. MurG subfamily.

It is found in the cell inner membrane. The enzyme catalyses di-trans,octa-cis-undecaprenyl diphospho-N-acetyl-alpha-D-muramoyl-L-alanyl-D-glutamyl-meso-2,6-diaminopimeloyl-D-alanyl-D-alanine + UDP-N-acetyl-alpha-D-glucosamine = di-trans,octa-cis-undecaprenyl diphospho-[N-acetyl-alpha-D-glucosaminyl-(1-&gt;4)]-N-acetyl-alpha-D-muramoyl-L-alanyl-D-glutamyl-meso-2,6-diaminopimeloyl-D-alanyl-D-alanine + UDP + H(+). Its pathway is cell wall biogenesis; peptidoglycan biosynthesis. Cell wall formation. Catalyzes the transfer of a GlcNAc subunit on undecaprenyl-pyrophosphoryl-MurNAc-pentapeptide (lipid intermediate I) to form undecaprenyl-pyrophosphoryl-MurNAc-(pentapeptide)GlcNAc (lipid intermediate II). The polypeptide is UDP-N-acetylglucosamine--N-acetylmuramyl-(pentapeptide) pyrophosphoryl-undecaprenol N-acetylglucosamine transferase (Synechococcus sp. (strain RCC307)).